Here is a 359-residue protein sequence, read N- to C-terminus: WAT1-related protein At5g64700 (359 aa).

10 helical membrane-spanning segments follow: residues 10 to 30 (LMVTIIQVIYTIMFLISKAVF), 37 to 57 (FVFVFYRQAFATIFLAPLAFF), 66 to 86 (LSFVTFIKIFMLSLFGVTLSL), 100 to 120 (LAAATTASLPAITFFLALLFG), 135 to 155 (LVGITVCMGGVIILAIYKGPL), 186 to 206 (WLKGCVLMITSNILWGLWLVL), 218 to 238 (LYFTTLHCLLSSIQSFVIAIA), 256 to 276 (AVIYCGFIVTGVAYYLQSWVI), 282 to 302 (VFLSMFTPLSLLFTLLSSAIL), and 306 to 326 (IISLGSIVGGLLLIIGLYCVL). EamA domains lie at 18-136 (IYTI…AKLV) and 198-326 (ILWG…YCVL).

It belongs to the drug/metabolite transporter (DMT) superfamily. Plant drug/metabolite exporter (P-DME) (TC 2.A.7.4) family.

The protein localises to the membrane. The sequence is that of WAT1-related protein At5g64700 from Arabidopsis thaliana (Mouse-ear cress).